The primary structure comprises 604 residues: Prostaglandin G/H synthase 2 (604 aa).

The signal sequence occupies residues 1–17 (MLARALLLCAAVALSGA). In terms of domain architecture, EGF-like spans 18–55 (ANPCCSHPCQNRGVCMSVGFDQYKCDCTRTGFYGENCT). 4 disulfide bridges follow: Cys21–Cys32, Cys22–Cys145, Cys26–Cys42, and Cys44–Cys54. Asn53 is a glycosylation site (N-linked (GlcNAc...) asparagine). Substrate is bound at residue Arg106. The N-linked (GlcNAc...) asparagine glycan is linked to Asn130. The active-site Proton acceptor is the His193. Tyr341 is a binding site for substrate. Tyr371 acts as the For cyclooxygenase activity in catalysis. Residue His374 coordinates heme b. Asn396 carries an N-linked (GlcNAc...) asparagine glycan. Cys526 is subject to S-nitrosocysteine. A disulfide bridge connects residues Cys555 and Cys561. Ser565 carries the post-translational modification O-acetylserine. N-linked (GlcNAc...) asparagine glycosylation occurs at Asn580.

Belongs to the prostaglandin G/H synthase family. In terms of assembly, homodimer. It depends on heme b as a cofactor. S-nitrosylation by NOS2 (iNOS) activates enzyme activity. S-nitrosylation may take place on different Cys residues in addition to Cys-526. In terms of processing, acetylated at Ser-565 by SPHK1. During neuroinflammation, acetylation by SPHK1 promotes neuronal secretion of specialized preresolving mediators (SPMs), especially 15-R-lipoxin A4, which results in an increase of phagocytic microglia.

The protein resides in the microsome membrane. Its subcellular location is the endoplasmic reticulum membrane. It localises to the nucleus inner membrane. The protein localises to the nucleus outer membrane. The enzyme catalyses (5Z,8Z,11Z,14Z)-eicosatetraenoate + AH2 + 2 O2 = prostaglandin H2 + A + H2O. The catalysed reaction is (5Z,8Z,11Z,14Z)-eicosatetraenoate + 2 O2 = prostaglandin G2. It catalyses the reaction prostaglandin G2 + AH2 = prostaglandin H2 + A + H2O. It carries out the reaction (5Z,8Z,11Z,14Z,17Z)-eicosapentaenoate + 2 O2 = prostaglandin G3. The enzyme catalyses prostaglandin G3 + AH2 = prostaglandin H3 + A + H2O. The catalysed reaction is (8Z,11Z,14Z)-eicosatrienoate + 2 O2 = prostaglandin G1. It catalyses the reaction prostaglandin G1 + AH2 = prostaglandin H1 + A + H2O. It carries out the reaction 2-(5Z,8Z,11Z,14Z)-eicosatetraenoyl-sn-glycero-3-phosphoethanolamine + 2 O2 = 2-(prostaglandin G2)-sn-glycero-3-phosphoethanolamine. The enzyme catalyses 2-(prostaglandin G2)-sn-glycero-3-phosphoethanolamine + AH2 = 2-(prostaglandin H2)-sn-glycero-3-phosphoethanolamine + A + H2O. The catalysed reaction is 2-(5Z,8Z,11Z,14Z)-eicosatetraenoyl-sn-glycero-3-phosphocholine + 2 O2 = 2-(prostaglandin G2)-sn-glycero-3-phosphocholine. It catalyses the reaction 2-(prostaglandin G2)-sn-glycero-3-phosphocholine + AH2 = 2-(prostaglandin H2)-sn-glycero-3-phosphocholine + A + H2O. It carries out the reaction (15S)-hydroperoxy-(5Z,8Z,11Z,13E)-eicosatetraenoate + AH2 = (15S)-hydroxy-(5Z,8Z,11Z,13E)-eicosatetraenoate + A + H2O. The enzyme catalyses 2-(5Z,8Z,11Z,14Z)-eicosatetraenoyl-sn-glycero-3-phosphocholine + AH2 + O2 = 2-[(15S)-hydroxy-(5Z,8Z,11Z,13E)-eicosatetraenoyl]-sn-glycero-3-phosphocholine + A + H2O. The catalysed reaction is 2-(5Z,8Z,11Z,14Z)-eicosatetraenoyl-sn-glycero-3-phosphocholine + AH2 + O2 = 2-[(15R)-hydroxy-(5Z,8Z,11Z,13E)-eicosatetraenoyl]-sn-glycero-3-phosphocholine + A + H2O. It catalyses the reaction 2-(5Z,8Z,11Z,14Z)-eicosatetraenoyl-sn-glycero-3-phosphocholine + AH2 + O2 = 2-[(11R)-hydroxy-(5Z,8Z,12E,14Z)-eicosatetraenoyl]-sn-glycero-3-phosphocholine + A + H2O. It carries out the reaction (9Z,12Z)-octadecadienoate + AH2 + O2 = 9-hydroxy-(10E,12Z)-octadecadienoate + A + H2O. The enzyme catalyses (9Z,12Z)-octadecadienoate + AH2 + O2 = 13-hydroxy-(9Z,11E)-octadecadienoate + A + H2O. The catalysed reaction is (5Z,8Z,11Z,14Z)-eicosatetraenoate + AH2 + O2 = (15R)-hydroxy-(5Z,8Z,11Z,13E)-eicosatetraenoate + A + H2O. It catalyses the reaction (5Z,8Z,11Z,14Z)-eicosatetraenoate + AH2 + O2 = (11R)-hydroxy-(5Z,8Z,12E,14Z)-eicosatetraenoate + A + H2O. It carries out the reaction (5Z,8Z,11Z,14Z,17Z)-eicosapentaenoate + AH2 + O2 = (11R)-hydroxy-(5Z,8Z,12E,14Z,17Z)-eicosapentaenoate + A + H2O. The enzyme catalyses (5Z,8Z,11Z,14Z,17Z)-eicosapentaenoate + AH2 + O2 = (18S)-hydroxy-(5Z,8Z,11Z,14Z,16E)-eicosapentaenoate + A + H2O. The catalysed reaction is (5Z,8Z,11Z,14Z,17Z)-eicosapentaenoate + AH2 + O2 = (18R)-hydroxy-(5Z,8Z,11Z,14Z,16E)-eicosapentaenoate + A + H2O. It catalyses the reaction (5Z,8Z,11Z,14Z,17Z)-eicosapentaenoate + AH2 + O2 = (15R)-hydroxy-(5Z,8Z,11Z,13E,17Z)-eicosapentaenoate + A + H2O. It carries out the reaction (5Z,8Z,11Z,14Z,17Z)-eicosapentaenoate + AH2 + O2 = (15S)-hydroxy-(5Z,8Z,11Z,13E,17Z)-eicosapentaenoate + A + H2O. The enzyme catalyses (7Z,10Z,13Z,16Z,19Z)-docosapentaenoate + AH2 + O2 = 13R-hydroxy-(7Z,10Z,14E,16Z,19Z)-docosapentaenoate + A + H2O. The catalysed reaction is (4Z,7Z,10Z,13Z,16Z,19Z)-docosahexaenoate + AH2 + O2 = 13-hydroxy-(4Z,7Z,10Z,14E,16Z,19Z)-docosahexaenoate + A + H2O. It catalyses the reaction (5S)-hydroxy-(6E,8Z,11Z,14Z)-eicosatetraenoate + AH2 + O2 = (5S,15R)-dihydroxy-(6E,8Z,11Z,13E)-eicosatetraenoate + A + H2O. It carries out the reaction (4Z,7Z,10Z,13Z,16Z,19Z)-docosahexaenoate + AH2 + O2 = 17R-hydroxy-(4Z,7Z,10Z,13Z,15E,19Z)-docosahexaenoate + A + H2O. The enzyme catalyses (5S)-hydroxy-(6E,8Z,11Z,14Z)-eicosatetraenoate + AH2 + O2 = (5S,15S)-dihydroxy-(6E,8Z,11Z,13E)-eicosatetraenoate + A + H2O. The catalysed reaction is (5S)-hydroxy-(6E,8Z,11Z,14Z)-eicosatetraenoate + AH2 + O2 = (5S,11R)-dihydroxy-(6E,8Z,12E,14Z)-eicosatetraenoate + A + H2O. It catalyses the reaction 2-(5Z,8Z,11Z,14Z-eicosatetraenoyl)-glycerol + 2 O2 = 2-glyceryl-prostaglandin G2. It carries out the reaction 2-glyceryl-prostaglandin G2 + AH2 = 2-glyceryl-prostaglandin H2 + A + H2O. The enzyme catalyses (5Z,8Z,11Z,14Z)-eicosatetraenoate + O2 = (15R)-hydroperoxy-(5Z,8Z,11Z,13E)-eicosatetraenoate. The catalysed reaction is (5Z,8Z,11Z,14Z)-eicosatetraenoate + O2 = 11R-hydroperoxy-(5Z,8Z,12E,14Z)-eicosatetraenoate. It catalyses the reaction (9Z,12Z)-octadecadienoate + AH2 + O2 = (9R)-hydroxy-(10E,12Z)-octadecadienoate + A + H2O. It carries out the reaction (9Z,12Z)-octadecadienoate + AH2 + O2 = (9S)-hydroxy-(10E,12Z)-octadecadienoate + A + H2O. The enzyme catalyses (9Z,12Z)-octadecadienoate + AH2 + O2 = (13S)-hydroxy-(9Z,11E)-octadecadienoate + A + H2O. The catalysed reaction is (9Z,12Z)-octadecadienoate + AH2 + O2 = (13R)-hydroxy-(9Z,11E)-octadecadienoate + A + H2O. Its pathway is lipid metabolism; prostaglandin biosynthesis. In terms of biological role, dual cyclooxygenase and peroxidase in the biosynthesis pathway of prostanoids, a class of C20 oxylipins mainly derived from arachidonate ((5Z,8Z,11Z,14Z)-eicosatetraenoate, AA, C20:4(n-6)), with a particular role in the inflammatory response. The cyclooxygenase activity oxygenates AA to the hydroperoxy endoperoxide prostaglandin G2 (PGG2), and the peroxidase activity reduces PGG2 to the hydroxy endoperoxide prostaglandin H2 (PGH2), the precursor of all 2-series prostaglandins and thromboxanes. This complex transformation is initiated by abstraction of hydrogen at carbon 13 (with S-stereochemistry), followed by insertion of molecular O2 to form the endoperoxide bridge between carbon 9 and 11 that defines prostaglandins. The insertion of a second molecule of O2 (bis-oxygenase activity) yields a hydroperoxy group in PGG2 that is then reduced to PGH2 by two electrons. Similarly catalyzes successive cyclooxygenation and peroxidation of dihomo-gamma-linoleate (DGLA, C20:3(n-6)) and eicosapentaenoate (EPA, C20:5(n-3)) to corresponding PGH1 and PGH3, the precursors of 1- and 3-series prostaglandins. In an alternative pathway of prostanoid biosynthesis, converts 2-arachidonoyl lysophopholipids to prostanoid lysophopholipids, which are then hydrolyzed by intracellular phospholipases to release free prostanoids. Metabolizes 2-arachidonoyl glycerol yielding the glyceryl ester of PGH2, a process that can contribute to pain response. Generates lipid mediators from n-3 and n-6 polyunsaturated fatty acids (PUFAs) via a lipoxygenase-type mechanism. Oxygenates PUFAs to hydroperoxy compounds and then reduces them to corresponding alcohols. Plays a role in the generation of resolution phase interaction products (resolvins) during both sterile and infectious inflammation. Metabolizes docosahexaenoate (DHA, C22:6(n-3)) to 17R-HDHA, a precursor of the D-series resolvins (RvDs). As a component of the biosynthetic pathway of E-series resolvins (RvEs), converts eicosapentaenoate (EPA, C20:5(n-3)) primarily to 18S-HEPE that is further metabolized by ALOX5 and LTA4H to generate 18S-RvE1 and 18S-RvE2. In vascular endothelial cells, converts docosapentaenoate (DPA, C22:5(n-3)) to 13R-HDPA, a precursor for 13-series resolvins (RvTs) shown to activate macrophage phagocytosis during bacterial infection. In activated leukocytes, contributes to oxygenation of hydroxyeicosatetraenoates (HETE) to diHETES (5,15-diHETE and 5,11-diHETE). Can also use linoleate (LA, (9Z,12Z)-octadecadienoate, C18:2(n-6)) as substrate and produce hydroxyoctadecadienoates (HODEs) in a regio- and stereospecific manner, being (9R)-HODE ((9R)-hydroxy-(10E,12Z)-octadecadienoate) and (13S)-HODE ((13S)-hydroxy-(9Z,11E)-octadecadienoate) its major products. During neuroinflammation, plays a role in neuronal secretion of specialized preresolving mediators (SPMs) 15R-lipoxin A4 that regulates phagocytic microglia. The protein is Prostaglandin G/H synthase 2 (PTGS2) of Bos taurus (Bovine).